The chain runs to 463 residues: Chromosomal replication initiator protein DnaA (463 aa).

Residues 1 to 84 (MNTNQIILTN…QLFQHYNNAI (84 aa)) are domain I, interacts with DnaA modulators. Residues 84–124 (IKTVEIITKELPASNQATLELPTKTFADIGSSELNSENIFS) are domain II. Residues 125–343 (TFDIRFTFDN…GALNKVIAHS (219 aa)) form a domain III, AAA+ region region. Positions 171, 173, 174, and 175 each coordinate ATP. Positions 344-463 (NFTAKEITLE…INLMMKILQN (120 aa)) are domain IV, binds dsDNA.

It belongs to the DnaA family. In terms of assembly, oligomerizes as a right-handed, spiral filament on DNA at oriC.

The protein localises to the cytoplasm. Its function is as follows. Plays an essential role in the initiation and regulation of chromosomal replication. ATP-DnaA binds to the origin of replication (oriC) to initiate formation of the DNA replication initiation complex once per cell cycle. Binds the DnaA box (a 9 base pair repeat at the origin) and separates the double-stranded (ds)DNA. Forms a right-handed helical filament on oriC DNA; dsDNA binds to the exterior of the filament while single-stranded (ss)DNA is stabiized in the filament's interior. The ATP-DnaA-oriC complex binds and stabilizes one strand of the AT-rich DNA unwinding element (DUE), permitting loading of DNA polymerase. After initiation quickly degrades to an ADP-DnaA complex that is not apt for DNA replication. Binds acidic phospholipids. The sequence is that of Chromosomal replication initiator protein DnaA from Rickettsia bellii (strain RML369-C).